The primary structure comprises 310 residues: Lipoyl synthase (310 aa).

Residues Cys45, Cys50, Cys56, Cys71, Cys75, Cys78, and Ser285 each coordinate [4Fe-4S] cluster. The Radical SAM core domain occupies 57 to 274 (WTKKHATVMI…GSIARAKGFL (218 aa)).

Belongs to the radical SAM superfamily. Lipoyl synthase family. The cofactor is [4Fe-4S] cluster.

The protein localises to the cytoplasm. The catalysed reaction is [[Fe-S] cluster scaffold protein carrying a second [4Fe-4S](2+) cluster] + N(6)-octanoyl-L-lysyl-[protein] + 2 oxidized [2Fe-2S]-[ferredoxin] + 2 S-adenosyl-L-methionine + 4 H(+) = [[Fe-S] cluster scaffold protein] + N(6)-[(R)-dihydrolipoyl]-L-lysyl-[protein] + 4 Fe(3+) + 2 hydrogen sulfide + 2 5'-deoxyadenosine + 2 L-methionine + 2 reduced [2Fe-2S]-[ferredoxin]. Its pathway is protein modification; protein lipoylation via endogenous pathway; protein N(6)-(lipoyl)lysine from octanoyl-[acyl-carrier-protein]: step 2/2. In terms of biological role, catalyzes the radical-mediated insertion of two sulfur atoms into the C-6 and C-8 positions of the octanoyl moiety bound to the lipoyl domains of lipoate-dependent enzymes, thereby converting the octanoylated domains into lipoylated derivatives. The protein is Lipoyl synthase of Novosphingobium aromaticivorans (strain ATCC 700278 / DSM 12444 / CCUG 56034 / CIP 105152 / NBRC 16084 / F199).